The chain runs to 566 residues: Solute carrier family 2, facilitated glucose transporter member 9 (566 aa).

The disordered stretch occupies residues 1 to 31 (MARKQNRNSKELGLAPLADDTSHAGPPGPGR). Topologically, residues 1–51 (MARKQNRNSKELGLAPLADDTSHAGPPGPGRALLECDHLRSGLPDGRRRKD) are cytoplasmic. The residue at position 9 (serine 9) is a Phosphoserine. The helical transmembrane segment at 52-72 (WSCSLLVASLAGAFGSSFLYG) threads the bilayer. Over 73–107 (YNLSVVNAPTPYIKAFYNESWERRHGRPIDPDTLT) the chain is Extracellular. Asparagine 74 and asparagine 90 each carry an N-linked (GlcNAc...) asparagine glycan. Residues 108 to 128 (LLWSVTVSIFAIGGLVGTLMV) form a helical membrane-spanning segment. The Cytoplasmic portion of the chain corresponds to 129-140 (KMIGKVLGRKHT). Residues 141–161 (LLANNGFAISAALLMACSLQA) form a helical membrane-spanning segment. Over 162–171 (GAFEMLIVGR) the chain is Extracellular. Residues 172–192 (FIMGIDGGIALSVLPMYLSEI) form a helical membrane-spanning segment. The Cytoplasmic portion of the chain corresponds to 193–200 (SPKEIRGS). A helical membrane pass occupies residues 201–221 (LGQVTAIFICIGVFTGQLLGL). Over 222-231 (PELLGKESTW) the chain is Extracellular. The chain crosses the membrane as a helical span at residues 232-252 (PYLFGVIVVPAVVQLLSLPFL). The Cytoplasmic segment spans residues 253 to 316 (PDSPRYLLLE…LRAPYVRWQV (64 aa)). The chain crosses the membrane as a helical span at residues 317–337 (VTVIVTMACYQLCGLNAIWFY). Residues 338–354 (TNSIFGKAGIPPAKIPY) lie on the Extracellular side of the membrane. Residues 355–375 (VTLSTGGIETLAAIFSGLVIE) form a helical membrane-spanning segment. Residues 376-381 (HLGRRP) are Cytoplasmic-facing. The chain crosses the membrane as a helical span at residues 382–402 (LLIGGFGLMALFFGTLTVTLT). Residues 403–415 (LQDRAPWVPYLSI) are Extracellular-facing. The chain crosses the membrane as a helical span at residues 416-436 (VGILAIIASFCSGPGGIPFIL). Over 437-451 (TGEFFQQSQRPAAFI) the chain is Cytoplasmic. Residues 452–472 (IAGTVNWLSNFAVGLLFPFIQ) form a helical membrane-spanning segment. At 473–478 (KSLDTY) the chain is on the extracellular side. A helical transmembrane segment spans residues 479-499 (CFLVFATICMTGAIYLYFVLP). Residues 500 to 566 (ETKNRTYAEI…YMDDLTFQET (67 aa)) are Cytoplasmic-facing. Serine 514 carries the post-translational modification Phosphoserine. The span at 524–539 (EKIDSAVTDGKTKGRP) shows a compositional bias: basic and acidic residues. Residues 524-543 (EKIDSAVTDGKTKGRPEQVS) form a disordered region.

This sequence belongs to the major facilitator superfamily. Sugar transporter (TC 2.A.1.1) family.

Its subcellular location is the basolateral cell membrane. The protein resides in the apical cell membrane. It catalyses the reaction urate(out) = urate(in). Its function is as follows. High-capacity urate transporter, which may play a role in the urate reabsorption by proximal tubules. May have a residual high-affinity, low-capacity glucose and fructose transporter activity. Transports urate at rates 45- to 60-fold faster than glucose. Does not transport galactose. May mediate small uptake of adenine but not of other nucleobases. The sequence is that of Solute carrier family 2, facilitated glucose transporter member 9 from Pongo abelii (Sumatran orangutan).